A 614-amino-acid polypeptide reads, in one-letter code: Pentatricopeptide repeat-containing protein At1g63080, mitochondrial (614 aa).

The transit peptide at 1-7 directs the protein to the mitochondrion; the sequence is MSLAKRF. PPR repeat units follow at residues 64-98, 99-133, 134-168, 169-203, 204-238, 239-273, 274-308, 309-343, 344-378, 379-413, 414-448, 449-483, 484-518, 519-553, and 554-588; these read SIVE…GVSH, NLYT…GYGP, SIVT…GYQP, DTVT…GCQP, DLVT…KIEA, DVVI…GIRP, DVFT…KINP, NVVT…SIDP, NIVT…DCLP, DVVT…GLVG, NTVT…GVHP, NIMT…KMEP, DIYT…GVKP, DVIA…GPLP, and DSGT…RFAG.

Belongs to the PPR family. P subfamily.

The protein localises to the mitochondrion. This is Pentatricopeptide repeat-containing protein At1g63080, mitochondrial from Arabidopsis thaliana (Mouse-ear cress).